A 134-amino-acid polypeptide reads, in one-letter code: Small ribosomal subunit protein uS12 (134 aa).

A disordered region spans residues 1–30 (MPTINQLVKHGREKVKEKSKSPALQGHPQK). Position 89 is a 3-methylthioaspartic acid (D89). The segment at 106–134 (GVENRRQSRSKYGAKRPKAGAAAGAKGKK) is disordered. Over residues 112–123 (QSRSKYGAKRPK) the composition is skewed to basic residues. The segment covering 124–134 (AGAAAGAKGKK) has biased composition (low complexity).

It belongs to the universal ribosomal protein uS12 family. Part of the 30S ribosomal subunit. Contacts proteins S8 and S17. May interact with IF1 in the 30S initiation complex.

Its function is as follows. With S4 and S5 plays an important role in translational accuracy. Functionally, interacts with and stabilizes bases of the 16S rRNA that are involved in tRNA selection in the A site and with the mRNA backbone. Located at the interface of the 30S and 50S subunits, it traverses the body of the 30S subunit contacting proteins on the other side and probably holding the rRNA structure together. The combined cluster of proteins S8, S12 and S17 appears to hold together the shoulder and platform of the 30S subunit. The sequence is that of Small ribosomal subunit protein uS12 from Fervidobacterium nodosum (strain ATCC 35602 / DSM 5306 / Rt17-B1).